The following is a 366-amino-acid chain: Inactive protein RESTRICTED TEV MOVEMENT 2 (366 aa).

Residues 14–121 (VQYEDFVPKS…LPETSRTEAA (108 aa)) enclose the sHSP domain. One copy of the A-1 repeat lies at 129–133 (LEEKR). Positions 129-220 (LEEKRLLEES…LEERRLEERK (92 aa)) are 6 X 5 AA repeats A of L-E-E-[SKR]-[ERK]. The A-2 repeat unit spans residues 135-139 (LEESR). The A-3 repeat unit spans residues 156 to 160 (LEEKE). Residues 163-176 (IRKLQEEAKAKEEA) form a B-1 repeat. Residues 163 to 206 (IRKLQEEAKAKEEAEMRKLQEEAKANEEAAAKKLQEEIEAKEKL) form a 3 X 14 AA repeats B of [IMA]-[RK]-K-L-Q-E-E-A-K-A-K-E-[EK]-[LA] region. One copy of the B-2 repeat lies at 178–191 (MRKLQEEAKANEEA). A B-3 repeat occupies 193 to 205 (AKKLQEEIEAKEK). An A-4 repeat occupies 206–210 (LEERK). An A-5 repeat occupies 211-215 (LEERR). One copy of the A-6 repeat lies at 216–220 (LEERK). The helical transmembrane segment at 322–342 (LMMNVGVAALVIFALGAYVSY) threads the bilayer. The interval 345-366 (CSSSSSSSSSSPSSSSSSTKPE) is disordered. Residues 346–366 (SSSSSSSSSSPSSSSSSTKPE) show a composition bias toward low complexity.

The protein belongs to the small heat shock protein (HSP20) family.

The protein localises to the cell membrane. Seems to not be involved in heat resistance. Unable to mediate restriction of long-distance movement of the pathogenic tobacco etch virus (TEV) without causing a hypersensitive response or inducing systemic acquired resistance. This Arabidopsis thaliana (Mouse-ear cress) protein is Inactive protein RESTRICTED TEV MOVEMENT 2 (RTM2).